We begin with the raw amino-acid sequence, 282 residues long: Chromatin modification-related protein YNG2 (282 aa).

The stretch at 35 to 86 (LIEEKKKYEQKESQIHKFIRQQGSIPKHPQEDGLDKEIKESLLKCQSLQREK) forms a coiled coil. Positions 123–217 (DGDMDSAAEA…KGQNGSPENE (95 aa)) are disordered. Residues 129-143 (AAEASRESSVVSNSS) are compositionally biased toward low complexity. Ser183 carries the post-translational modification Phosphoserine. Thr185 carries the phosphothreonine modification. The residue at position 188 (Ser188) is a Phosphoserine. Residues 191–203 (IEKKIARTKEFKN) are compositionally biased toward basic and acidic residues. Residues 204–214 (SRNGKGQNGSP) show a composition bias toward polar residues. The PHD-type zinc finger occupies 222 to 271 (TLYCFCQRVSFGEMVACDGPNCKYEWFHYDCVNLKEPPKGTWYCPECKIE). Residues Cys225, Cys227, Cys238, Cys243, His249, Cys252, Cys265, and Cys268 each coordinate Zn(2+).

Belongs to the ING family. In terms of assembly, interacts with H3K4me3 and to a lesser extent with H3K4me2. Component of the NuA4 histone acetyltransferase complex composed of at least ACT1, ARP4, YAF9, VID21, SWC4, EAF3, EAF5, EAF6, EAF7, EPL1, ESA1, TRA1 and YNG2.

The protein localises to the nucleus. Component of the NuA4 histone acetyltransferase complex which is involved in transcriptional activation of selected genes principally by acetylation of nucleosomal histone H4 and H2A. The NuA4 complex is also involved in DNA repair. Involved in cell cycle progression and meiosis. The polypeptide is Chromatin modification-related protein YNG2 (YNG2) (Saccharomyces cerevisiae (strain ATCC 204508 / S288c) (Baker's yeast)).